Here is a 549-residue protein sequence, read N- to C-terminus: MFS-type transporter TwmF (549 aa).

4 helical membrane passes run 29–49 (IVIGLGITNLLAALENTVLTI), 63–83 (NFIWVTNAFFLSSTAILPLFG), 99–119 (VAIFVLGSGLCGGASTGAMLI), and 126–146 (GVGSGGIIMLSSIIISDLVPL). N-linked (GlcNAc...) asparagine glycosylation is present at asparagine 151. 10 consecutive transmembrane segments (helical) span residues 155 to 175 (ILMSILGIGSALGPLIGGAIV), 182 to 202 (WVFYLNLPIGGVSFVFLFIFL), 221 to 241 (LVGNAIVIASTVAILYALSYA), 249 to 269 (SWHTLVPLLVGFLGLFIFAGL), 291 to 311 (IILAINTFVSAALLYWCLFFL), 328 to 348 (VALLPISLLGIPGSMVGAIAL), 355 to 375 (KPVHIFAFALQTLGLGLFTLF), 390 to 410 (IVAFGGGMIFTTMLPAFQAFI), 421 to 441 (AWYFIRLFGHIWGVAIPAAIF), and 502 to 522 (VSIAFAGVAFLLTLLEKDVGL).

The protein belongs to the major facilitator superfamily.

Its subcellular location is the membrane. In terms of biological role, MFS efflux transporter; part of the gene cluster that mediates the biosynthesis of wortmanamides A and B, reduced long-chain polyketides amidated with a specific omega-amino acid, 5-aminopentanoic acid (5PA). This chain is MFS-type transporter TwmF, found in Talaromyces wortmannii (Penicillium wortmannii).